The following is a 398-amino-acid chain: Phosphoglycerate kinase (398 aa).

Substrate contacts are provided by residues 21 to 23, Arg-36, 59 to 62, Arg-119, and Arg-157; these read DFN and HLGR. ATP is bound by residues Lys-208, Gly-296, Glu-327, and 354-357; that span reads GGDS.

The protein belongs to the phosphoglycerate kinase family. Monomer.

It localises to the cytoplasm. The enzyme catalyses (2R)-3-phosphoglycerate + ATP = (2R)-3-phospho-glyceroyl phosphate + ADP. It participates in carbohydrate degradation; glycolysis; pyruvate from D-glyceraldehyde 3-phosphate: step 2/5. The protein is Phosphoglycerate kinase of Streptococcus agalactiae serotype III (strain NEM316).